Here is a 150-residue protein sequence, read N- to C-terminus: Peptide deformylase (150 aa).

Residues C88 and H130 each coordinate Fe cation. E131 is an active-site residue. H134 lines the Fe cation pocket.

This sequence belongs to the polypeptide deformylase family. The cofactor is Fe(2+).

The enzyme catalyses N-terminal N-formyl-L-methionyl-[peptide] + H2O = N-terminal L-methionyl-[peptide] + formate. Its function is as follows. Removes the formyl group from the N-terminal Met of newly synthesized proteins. Requires at least a dipeptide for an efficient rate of reaction. N-terminal L-methionine is a prerequisite for activity but the enzyme has broad specificity at other positions. In Desulfitobacterium hafniense (strain Y51), this protein is Peptide deformylase.